A 561-amino-acid polypeptide reads, in one-letter code: Oligo-1,6-glucosidase (561 aa).

Catalysis depends on D199, which acts as the Nucleophile. The active-site Proton donor is E256.

Belongs to the glycosyl hydrolase 13 family.

Its subcellular location is the cytoplasm. The catalysed reaction is Hydrolysis of (1-&gt;6)-alpha-D-glucosidic linkages in some oligosaccharides produced from starch and glycogen by alpha-amylase, and in isomaltose.. The sequence is that of Oligo-1,6-glucosidase (malL) from Halalkalibacterium halodurans (strain ATCC BAA-125 / DSM 18197 / FERM 7344 / JCM 9153 / C-125) (Bacillus halodurans).